Here is a 55-residue protein sequence, read N- to C-terminus: Metallothionein-3 (55 aa).

Belongs to the metallothionein superfamily. Type 11 family.

The chain is Metallothionein-3 (MTP3) from Yarrowia lipolytica (strain CLIB 122 / E 150) (Yeast).